We begin with the raw amino-acid sequence, 487 residues long: MLLPGLLLLLLLLAGTRWLWGQWKLRKLHLPPLAPGFLHFLQPNLPIYLLGLTQKLGPIYRIRLGMQDVVVLNSNRTIEEALIQKWVDFAGRPHMLNGKMDLDLSLGDYSLMWKAHKKLSRSALMLGMRDSMEPLIEQLTQEFCERMRAQAGTPVAIHKEFSFLTCSIISCLTFGDKDSTLVQTLHDCVQDLLQAWNHWSIQILTIIPLLRFLPNPGLQKLKQIQESRDHIVKQQLKQHKDSLVAGQWKDMIDYMLQGVEKQRDGKDEERLHEGHVHMSVVDLFIGGTETTATTLSWAVAFLLHHPEIQKRLQEELDLKLGPGSQLLYRNRMQLPLLMATIAEVLRLRPVVPLALPHRATRASSISGYDIPKDMVIIPNIQGANLDEMVWELPSKFWPDRFLEPGKNPRTPSFGCGARVCLGEPLARLELFVVLARLLQAFTLLPPPDGTLPSLQPQPYAGINLPIPPFQVRLQPRNLAPQDQGERP.

The heme b site is built by R92 and K117. R228 serves as a coordination point for 17alpha-hydroxyprogesterone. R228 contacts progesterone. Residues H357, R418, and C420 each coordinate heme b.

It belongs to the cytochrome P450 family. The cofactor is heme b.

It is found in the endoplasmic reticulum membrane. It localises to the microsome membrane. The catalysed reaction is progesterone + reduced [NADPH--hemoprotein reductase] + O2 = 21-hydroxyprogesterone + oxidized [NADPH--hemoprotein reductase] + H2O + H(+). It carries out the reaction 17alpha-hydroxyprogesterone + reduced [NADPH--hemoprotein reductase] + O2 = 11-deoxycortisol + oxidized [NADPH--hemoprotein reductase] + H2O + H(+). In terms of biological role, a cytochrome P450 monooxygenase that plays a major role in adrenal steroidogenesis. Catalyzes the hydroxylation at C-21 of progesterone and 17alpha-hydroxyprogesterone to respectively form 11-deoxycorticosterone and 11-deoxycortisol, intermediate metabolites in the biosynthetic pathway of mineralocorticoids and glucocorticoids. Mechanistically, uses molecular oxygen inserting one oxygen atom into a substrate, and reducing the second into a water molecule, with two electrons provided by NADPH via cytochrome P450 reductase (CPR; NADPH-ferrihemoprotein reductase). The polypeptide is Steroid 21-hydroxylase (Cyp21) (Mus musculus (Mouse)).